The sequence spans 96 residues: Aspartyl/glutamyl-tRNA(Asn/Gln) amidotransferase subunit C (96 aa).

It belongs to the GatC family. Heterotrimer of A, B and C subunits.

It carries out the reaction L-glutamyl-tRNA(Gln) + L-glutamine + ATP + H2O = L-glutaminyl-tRNA(Gln) + L-glutamate + ADP + phosphate + H(+). The enzyme catalyses L-aspartyl-tRNA(Asn) + L-glutamine + ATP + H2O = L-asparaginyl-tRNA(Asn) + L-glutamate + ADP + phosphate + 2 H(+). Allows the formation of correctly charged Asn-tRNA(Asn) or Gln-tRNA(Gln) through the transamidation of misacylated Asp-tRNA(Asn) or Glu-tRNA(Gln) in organisms which lack either or both of asparaginyl-tRNA or glutaminyl-tRNA synthetases. The reaction takes place in the presence of glutamine and ATP through an activated phospho-Asp-tRNA(Asn) or phospho-Glu-tRNA(Gln). This Leptospira interrogans serogroup Icterohaemorrhagiae serovar copenhageni (strain Fiocruz L1-130) protein is Aspartyl/glutamyl-tRNA(Asn/Gln) amidotransferase subunit C.